Reading from the N-terminus, the 160-residue chain is SsrA-binding protein (160 aa).

It belongs to the SmpB family.

It is found in the cytoplasm. In terms of biological role, required for rescue of stalled ribosomes mediated by trans-translation. Binds to transfer-messenger RNA (tmRNA), required for stable association of tmRNA with ribosomes. tmRNA and SmpB together mimic tRNA shape, replacing the anticodon stem-loop with SmpB. tmRNA is encoded by the ssrA gene; the 2 termini fold to resemble tRNA(Ala) and it encodes a 'tag peptide', a short internal open reading frame. During trans-translation Ala-aminoacylated tmRNA acts like a tRNA, entering the A-site of stalled ribosomes, displacing the stalled mRNA. The ribosome then switches to translate the ORF on the tmRNA; the nascent peptide is terminated with the 'tag peptide' encoded by the tmRNA and targeted for degradation. The ribosome is freed to recommence translation, which seems to be the essential function of trans-translation. The chain is SsrA-binding protein from Yersinia pseudotuberculosis serotype O:1b (strain IP 31758).